We begin with the raw amino-acid sequence, 42 residues long: Large ribosomal subunit protein bL34c (42 aa).

It belongs to the bacterial ribosomal protein bL34 family.

The protein localises to the plastid. It localises to the chloroplast. The protein is Large ribosomal subunit protein bL34c (rpl34) of Olisthodiscus luteus (Marine phytoflagellate).